Consider the following 188-residue polypeptide: VQ motif-containing protein 18 (188 aa).

3 disordered regions span residues 1-20 (MEITQYQSFHEGSSSRVSMN), 58-92 (LTGKPAPGEAKTGKKRAKSRITTPQEPVCDDHQPV), and 157-188 (GFIFNNNNNNNNNNNNNNNNNTNFDTKAHNSS). Residues 51-60 (FRSLVQSLTG) carry the VQ motif. Positions 161 to 179 (NNNNNNNNNNNNNNNNNTN) are enriched in low complexity.

The protein resides in the nucleus. Its function is as follows. May function as positive regulator of plant growth. This Arabidopsis thaliana (Mouse-ear cress) protein is VQ motif-containing protein 18.